The primary structure comprises 806 residues: Ankyrin repeat, bromo and BTB domain-containing protein DDB_G0293800 (806 aa).

ANK repeat units follow at residues 1–30, 34–63, 67–96, 100–130, and 134–163; these read MSNK…DVNQ, SNRY…LVNC, RGAT…DVNC, AGST…DVNL, and EGST…RADV. The segment covering 210-228 has biased composition (basic and acidic residues); the sequence is GVGKKEDDDNNMKIDKQES. Residues 210-231 are disordered; sequence GVGKKEDDDNNMKIDKQESEQQ. Residues 239–307 enclose the BTB domain; the sequence is SDITFLIENQ…IYTGSIEKFE (69 aa). 2 disordered regions span residues 423–517 and 621–743; these read TRTA…SDSM and QNFP…EERR. 2 stretches are compositionally biased toward low complexity: residues 426–436 and 443–511; these read ANANASNSNQS and TSTT…SSSS. The Bromo domain occupies 516 to 622; that stretch reads SMNEKNLTFC…NAFDQKFLQN (107 aa). Positions 626-641 are enriched in pro residues; the sequence is EKPPTYKPPPPTPTPI. Positions 642 to 658 are enriched in low complexity; the sequence is PTQQQQQQSTSSTSTPT. Residues 666–675 are compositionally biased toward basic and acidic residues; sequence DEHVKVKEDT. Polar residues predominate over residues 676 to 693; the sequence is NSAQPTSSSSNHTNGENA. Over residues 694 to 733 the composition is skewed to low complexity; the sequence is SSSSSSSSSKQSNNNNNNNNNNNSNSTTNSSSSSSSTTTT. Residues 727-806 form the NET domain; sequence SSSTTTTQKK…ECFKKQKQDE (80 aa).

The polypeptide is Ankyrin repeat, bromo and BTB domain-containing protein DDB_G0293800 (Dictyostelium discoideum (Social amoeba)).